Here is a 602-residue protein sequence, read N- to C-terminus: Elongation factor 4 (602 aa).

The tr-type G domain maps to 6–188 (DHIRNFSIVA…AIVNKLPAPK (183 aa)). Residues 18–23 (DHGKST) and 135–138 (NKID) contribute to the GTP site.

Belongs to the TRAFAC class translation factor GTPase superfamily. Classic translation factor GTPase family. LepA subfamily.

It localises to the cell inner membrane. The catalysed reaction is GTP + H2O = GDP + phosphate + H(+). In terms of biological role, required for accurate and efficient protein synthesis under certain stress conditions. May act as a fidelity factor of the translation reaction, by catalyzing a one-codon backward translocation of tRNAs on improperly translocated ribosomes. Back-translocation proceeds from a post-translocation (POST) complex to a pre-translocation (PRE) complex, thus giving elongation factor G a second chance to translocate the tRNAs correctly. Binds to ribosomes in a GTP-dependent manner. The sequence is that of Elongation factor 4 from Brucella abortus (strain 2308).